A 246-amino-acid chain; its full sequence is Flagellar brake protein YcgR (246 aa).

A PilZ domain is found at 128-232 (KRAHFRAYVG…QAERQLLQAI (105 aa)).

It belongs to the YcgR family. In terms of assembly, monomer. Interacts with the flagellar basal bodies.

The protein resides in the bacterial flagellum basal body. Functionally, acts as a flagellar brake, regulating swimming and swarming in a bis-(3'-5') cyclic diguanylic acid (c-di-GMP)-dependent manner. Binds 1 c-di-GMP dimer per subunit. Increasing levels of c-di-GMP lead to decreased motility. The sequence is that of Flagellar brake protein YcgR from Thioalkalivibrio sulfidiphilus (strain HL-EbGR7).